We begin with the raw amino-acid sequence, 408 residues long: CinA-like protein (408 aa).

The protein belongs to the CinA family.

The sequence is that of CinA-like protein from Anaeromyxobacter sp. (strain K).